We begin with the raw amino-acid sequence, 374 residues long: Tomoregulin-2 (374 aa).

The N-terminal stretch at 1–40 (MVLWESPRQCSSWTLCEGFCWLLLLPVTLLIIARPVKLAA) is a signal peptide. Residues 41 to 320 (FPTSLSDCQT…VPGPVRFQYV (280 aa)) are Extracellular-facing. N55 carries an N-linked (GlcNAc...) asparagine glycan. 2 Kazal-like domains span residues 90–137 (VCQF…SCAT) and 181–229 (VCNI…RCQD). 6 cysteine pairs are disulfide-bonded: C91–C121, C95–C114, C103–C135, C182–C213, C186–C206, and C195–C227. N230 carries an N-linked (GlcNAc...) asparagine glycan. One can recognise an EGF-like domain in the interval 261-301 (HHIPCPEHYNGFCMHGKCEHSINMQEPSCRCDAGYTGQHCE). 3 cysteine pairs are disulfide-bonded: C265-C278, C273-C289, and C291-C300. The interval 303–320 (KDYSVLYVVPGPVRFQYV) is required for shedding. Residues 321-341 (LIAAVIGTIQIAVICVVVLCI) traverse the membrane as a helical segment. Over 342–374 (TRKCPRSNRIHRQKQNTGHYSSDNTTRASTRLI) the chain is Cytoplasmic. Residues 353 to 374 (RQKQNTGHYSSDNTTRASTRLI) form a disordered region. Positions 356 to 374 (QNTGHYSSDNTTRASTRLI) are enriched in polar residues.

This sequence belongs to the tomoregulin family. In terms of processing, O-glycosylated; contains chondroitin sulfate glycosaminoglycans. A soluble form (TMEFF2-ECD) is produced by proteolytic shedding. This shedding can be induced by phorbol ester or pro-inflammatory cytokines such as TNFalpha, and is mediated by a metalloproteinase ADAM. Widely expressed in the brain. In the olfactory bulb expressed in mitral cell, granule, and glomerular layers. In the hippocampus expressed in hippocampal cornu ammonis, pyramidal layer, dentate gyrus, and substantia nigra pars compacta.

The protein localises to the membrane. In terms of biological role, may be a survival factor for hippocampal and mesencephalic neurons. The shedded form may up-regulate cell proliferation. In Mus musculus (Mouse), this protein is Tomoregulin-2 (Tmeff2).